The following is a 94-amino-acid chain: Cell division topological specificity factor (94 aa).

It belongs to the MinE family.

Functionally, prevents the cell division inhibition by proteins MinC and MinD at internal division sites while permitting inhibition at polar sites. This ensures cell division at the proper site by restricting the formation of a division septum at the midpoint of the long axis of the cell. The polypeptide is Cell division topological specificity factor (Clostridioides difficile (strain 630) (Peptoclostridium difficile)).